A 120-amino-acid chain; its full sequence is UPF0715 membrane protein YwlA (120 aa).

Transmembrane regions (helical) follow at residues 3–23 (YNYT…VIYI), 26–46 (FIIA…LIFA), 63–83 (LYLL…FGML), and 95–115 (AFYL…SVLL).

This sequence belongs to the UPF0715 family.

It is found in the cell membrane. The protein is UPF0715 membrane protein YwlA (ywlA) of Bacillus subtilis (strain 168).